A 612-amino-acid polypeptide reads, in one-letter code: Threonine--tRNA ligase (612 aa).

A catalytic region spans residues 218–509; that stretch reads DHRKLGVELG…LSEHFGGNFP (292 aa). 3 residues coordinate Zn(2+): Cys-310, His-361, and His-486.

It belongs to the class-II aminoacyl-tRNA synthetase family. As to quaternary structure, homodimer. Requires Zn(2+) as cofactor.

It localises to the cytoplasm. It catalyses the reaction tRNA(Thr) + L-threonine + ATP = L-threonyl-tRNA(Thr) + AMP + diphosphate + H(+). In terms of biological role, catalyzes the attachment of threonine to tRNA(Thr) in a two-step reaction: L-threonine is first activated by ATP to form Thr-AMP and then transferred to the acceptor end of tRNA(Thr). Also edits incorrectly charged L-seryl-tRNA(Thr). This chain is Threonine--tRNA ligase, found in Helicobacter pylori (strain HPAG1).